Here is a 266-residue protein sequence, read N- to C-terminus: Putative cysteine-rich repeat secretory protein 20 (266 aa).

A signal peptide spans 1–33 (MYFPPSSVPKRLVLVHISAVVAIKLLLIRSVSS). 2 consecutive Gnk2-homologous domains span residues 40–142 (YLQH…SIRN) and 148–261 (YNNN…LYPF).

This sequence belongs to the cysteine-rich repeat secretory protein family.

The protein localises to the secreted. This is Putative cysteine-rich repeat secretory protein 20 (CRRSP20) from Arabidopsis thaliana (Mouse-ear cress).